We begin with the raw amino-acid sequence, 445 residues long: Cyclic GMP-AMP phosphodiesterase SMPDL3A (445 aa).

Residues 1-22 (MALPGNFLCCLLVAWLCDPGLG) form the signal peptide. Residues Asp42 and His44 each coordinate Zn(2+). The cysteines at positions 59 and 78 are disulfide-linked. N-linked (GlcNAc...) asparagine glycosylation occurs at Asn66. Asp107 lines the Zn(2+) pocket. ATP is bound at residue His111. An N-linked (GlcNAc...) asparagine glycan is attached at Asn128. A Zn(2+)-binding site is contributed by Asn148. Asn148 and His149 together coordinate ATP. Asn219 and Asn235 each carry an N-linked (GlcNAc...) asparagine glycan. Zn(2+) is bound by residues His249, His290, and His292. 2 N-linked (GlcNAc...) asparagine glycosylation sites follow: Asn353 and Asn364. Cystine bridges form between Cys417-Cys421 and Cys427-Cys440.

The protein belongs to the acid sphingomyelinase family. In terms of assembly, monomer. Homodimer; homodimerizes following 2',3'-cGAMP-binding. Requires Zn(2+) as cofactor.

It is found in the secreted. The catalysed reaction is 2',3'-cGAMP + H2O = 5'-pGpA(2'-5') + H(+). It catalyses the reaction 5'-pGpA(2'-5') + H2O = 5'-GpA(2'-5') + phosphate. The enzyme catalyses a ribonucleoside 5'-triphosphate + H2O = a ribonucleoside 5'-diphosphate + phosphate + H(+). It carries out the reaction ATP + H2O = ADP + phosphate + H(+). Cyclic-nucleotide phosphodiesterase that acts as a negative regulator of innate immunity by mediating degradation of 2',3'-cGAMP, thereby inhibiting the cGAS-STING signaling. Specifically linearizes 2',3'-cGAMP into 2'5'-bond pGpA and further hydrolyzes pGpA to produce GpA. Also has in vitro nucleotide phosphodiesterase activity with nucleoside triphosphates, such as ATP. Has in vitro activity with p-nitrophenyl-TMP. Has lower activity with nucleoside diphosphates, and no activity with nucleoside monophosphates. Has in vitro activity with CDP-choline, giving rise to CMP and phosphocholine. Has in vitro activity with CDP-ethanolamine. Does not have sphingomyelin phosphodiesterase activity. The sequence is that of Cyclic GMP-AMP phosphodiesterase SMPDL3A (Smpdl3a) from Rattus norvegicus (Rat).